The primary structure comprises 62 residues: Large ribosomal subunit protein bL28 (62 aa).

It belongs to the bacterial ribosomal protein bL28 family.

In Acidothermus cellulolyticus (strain ATCC 43068 / DSM 8971 / 11B), this protein is Large ribosomal subunit protein bL28.